A 235-amino-acid chain; its full sequence is Phosphoribosylaminoimidazole-succinocarboxamide synthase (235 aa).

This sequence belongs to the SAICAR synthetase family.

The catalysed reaction is 5-amino-1-(5-phospho-D-ribosyl)imidazole-4-carboxylate + L-aspartate + ATP = (2S)-2-[5-amino-1-(5-phospho-beta-D-ribosyl)imidazole-4-carboxamido]succinate + ADP + phosphate + 2 H(+). The protein operates within purine metabolism; IMP biosynthesis via de novo pathway; 5-amino-1-(5-phospho-D-ribosyl)imidazole-4-carboxamide from 5-amino-1-(5-phospho-D-ribosyl)imidazole-4-carboxylate: step 1/2. This Streptococcus pneumoniae serotype 19F (strain G54) protein is Phosphoribosylaminoimidazole-succinocarboxamide synthase.